Reading from the N-terminus, the 483-residue chain is Xylulose kinase (483 aa).

79–80 contacts substrate; it reads MH.

This sequence belongs to the FGGY kinase family.

The enzyme catalyses D-xylulose + ATP = D-xylulose 5-phosphate + ADP + H(+). Its function is as follows. Catalyzes the phosphorylation of D-xylulose to D-xylulose 5-phosphate. The sequence is that of Xylulose kinase from Staphylococcus xylosus.